The following is a 126-amino-acid chain: Fluoride-specific ion channel FluC (126 aa).

The next 4 membrane-spanning stretches (helical) occupy residues 3–23 (MILA…LTGV), 39–59 (TVNV…AHVW), 71–91 (VGVL…ALLV), and 101–121 (AYVA…LALI). Na(+) is bound by residues glycine 75 and threonine 78.

Belongs to the fluoride channel Fluc/FEX (TC 1.A.43) family.

Its subcellular location is the cell inner membrane. It catalyses the reaction fluoride(in) = fluoride(out). Na(+) is not transported, but it plays an essential structural role and its presence is essential for fluoride channel function. Functionally, fluoride-specific ion channel. Important for reducing fluoride concentration in the cell, thus reducing its toxicity. The chain is Fluoride-specific ion channel FluC from Rhodospirillum centenum (strain ATCC 51521 / SW).